Here is a 449-residue protein sequence, read N- to C-terminus: Cortexillin-2 (449 aa).

An actin-binding region spans residues 1-231 (MTDLHKEWEK…ILYTSLFFHA (231 aa)). Calponin-homology (CH) domains lie at 10–119 (KVQE…RKYR) and 128–233 (KSSE…HAYR). Coiled coils occupy residues 232 to 364 (YRAK…AEGL) and 408 to 441 (QFEEQAKRLGSKVENENISLEKYLSLKEEELKSA).

The protein belongs to the cortexillin family. As to quaternary structure, homodimer; parallel.

It localises to the cytoplasm. Its subcellular location is the cytoskeleton. In terms of biological role, actin-bundling protein. When linked to F-actin the actin filaments form preferentially anti-parallel bundles that associate into meshworks. Plays a major role in cytokinesis. In Heterostelium pallidum (strain ATCC 26659 / Pp 5 / PN500) (Cellular slime mold), this protein is Cortexillin-2 (ctxB).